A 271-amino-acid polypeptide reads, in one-letter code: 3-methyl-2-oxobutanoate hydroxymethyltransferase (271 aa).

Mg(2+)-binding residues include D49 and D88. 3-methyl-2-oxobutanoate contacts are provided by residues 49–50 (DS), D88, and K118. A Mg(2+)-binding site is contributed by E120. The active-site Proton acceptor is the E187.

The protein belongs to the PanB family. In terms of assembly, homodecamer; pentamer of dimers. Mg(2+) serves as cofactor.

Its subcellular location is the cytoplasm. It catalyses the reaction 3-methyl-2-oxobutanoate + (6R)-5,10-methylene-5,6,7,8-tetrahydrofolate + H2O = 2-dehydropantoate + (6S)-5,6,7,8-tetrahydrofolate. It participates in cofactor biosynthesis; (R)-pantothenate biosynthesis; (R)-pantoate from 3-methyl-2-oxobutanoate: step 1/2. Its function is as follows. Catalyzes the reversible reaction in which hydroxymethyl group from 5,10-methylenetetrahydrofolate is transferred onto alpha-ketoisovalerate to form ketopantoate. This Bartonella tribocorum (strain CIP 105476 / IBS 506) protein is 3-methyl-2-oxobutanoate hydroxymethyltransferase.